The primary structure comprises 164 residues: ATP synthase subunit b (164 aa).

A helical membrane pass occupies residues 12–32; it reads FILVTGSVIVLLLLIKAFAWG.

It belongs to the ATPase B chain family. As to quaternary structure, F-type ATPases have 2 components, F(1) - the catalytic core - and F(0) - the membrane proton channel. F(1) has five subunits: alpha(3), beta(3), gamma(1), delta(1), epsilon(1). F(0) has three main subunits: a(1), b(2) and c(10-14). The alpha and beta chains form an alternating ring which encloses part of the gamma chain. F(1) is attached to F(0) by a central stalk formed by the gamma and epsilon chains, while a peripheral stalk is formed by the delta and b chains.

The protein localises to the cell membrane. F(1)F(0) ATP synthase produces ATP from ADP in the presence of a proton or sodium gradient. F-type ATPases consist of two structural domains, F(1) containing the extramembraneous catalytic core and F(0) containing the membrane proton channel, linked together by a central stalk and a peripheral stalk. During catalysis, ATP synthesis in the catalytic domain of F(1) is coupled via a rotary mechanism of the central stalk subunits to proton translocation. Its function is as follows. Component of the F(0) channel, it forms part of the peripheral stalk, linking F(1) to F(0). In Streptococcus equi subsp. zooepidemicus (strain MGCS10565), this protein is ATP synthase subunit b.